Here is a 638-residue protein sequence, read N- to C-terminus: 1-deoxy-D-xylulose-5-phosphate synthase (638 aa).

Thiamine diphosphate contacts are provided by residues H79 and 120 to 122 (GHS). D151 is a binding site for Mg(2+). Residues 152 to 153 (GA), N182, Y291, and E373 contribute to the thiamine diphosphate site. Mg(2+) is bound at residue N182.

Belongs to the transketolase family. DXPS subfamily. In terms of assembly, homodimer. The cofactor is Mg(2+). It depends on thiamine diphosphate as a cofactor.

It catalyses the reaction D-glyceraldehyde 3-phosphate + pyruvate + H(+) = 1-deoxy-D-xylulose 5-phosphate + CO2. Its pathway is metabolic intermediate biosynthesis; 1-deoxy-D-xylulose 5-phosphate biosynthesis; 1-deoxy-D-xylulose 5-phosphate from D-glyceraldehyde 3-phosphate and pyruvate: step 1/1. In terms of biological role, catalyzes the acyloin condensation reaction between C atoms 2 and 3 of pyruvate and glyceraldehyde 3-phosphate to yield 1-deoxy-D-xylulose-5-phosphate (DXP). This Xanthomonas euvesicatoria pv. vesicatoria (strain 85-10) (Xanthomonas campestris pv. vesicatoria) protein is 1-deoxy-D-xylulose-5-phosphate synthase.